A 315-amino-acid chain; its full sequence is KH domain-containing protein At5g56140 (315 aa).

Disordered stretches follow at residues 1–53 and 136–158; these read MMMM…GGLR and SQFP…SPGS. Positions 7-28 are enriched in gly residues; that stretch reads LGGGGGGGGGSGGGIGGGGGGR. Composition is skewed to polar residues over residues 31 to 53 and 136 to 146; these read TYSS…GGLR and SQFPSERSVPS. Residues 171–238 enclose the KH domain; that stretch reads DIPVDNYPNF…EHLNEPLHIL (68 aa). Residues 289 to 315 are disordered; that stretch reads REEGSPMSGSVSPYNSLGMKRAKTREG. Serine 300 is modified (phosphoserine).

The protein localises to the nucleus. The polypeptide is KH domain-containing protein At5g56140 (Arabidopsis thaliana (Mouse-ear cress)).